We begin with the raw amino-acid sequence, 469 residues long: UTP--glucose-1-phosphate uridylyltransferase 2 (469 aa).

Alanine 2 bears the N-acetylalanine mark. UTP is bound by residues 85 to 88, lysine 99, glutamine 162, and glycine 191; that span reads LNGG. Residue 87-88 participates in substrate binding; sequence GG. Residues histidine 192 and 220-222 each bind substrate; that span reads NSD. Positions 222 and 360 each coordinate UTP.

The protein belongs to the UDPGP type 1 family. Expressed in cauline leaves, flowers and siliques.

It localises to the cytoplasm. It catalyses the reaction alpha-D-glucose 1-phosphate + UTP + H(+) = UDP-alpha-D-glucose + diphosphate. Its function is as follows. Converts glucose 1-phosphate to UDP-glucose, which is the major glycosyl donor for polysaccharides. Acts redundantly with UGP1 and is essential for the synthesis of sucrose, starch and cell wall, and callose deposition. In Arabidopsis thaliana (Mouse-ear cress), this protein is UTP--glucose-1-phosphate uridylyltransferase 2.